The following is an 86-amino-acid chain: Large ribosomal subunit protein eL20 (86 aa).

This sequence belongs to the eukaryotic ribosomal protein eL20 family. In terms of assembly, part of the 50S ribosomal subunit. Binds 23S rRNA.

The polypeptide is Large ribosomal subunit protein eL20 (Sulfolobus acidocaldarius (strain ATCC 33909 / DSM 639 / JCM 8929 / NBRC 15157 / NCIMB 11770)).